The sequence spans 88 residues: uncharacterized protein (88 aa).

Residues 34–54 form a helical membrane-spanning segment; the sequence is IIIAVILIFFLTIVGLFYLII.

The protein localises to the membrane. This is an uncharacterized protein from Ureaplasma parvum serovar 3 (strain ATCC 700970).